The primary structure comprises 336 residues: Effector SCP41 (336 aa).

Residues 1–19 form the signal peptide; sequence MRTETASLLLLAALSVAEE. Disordered stretches follow at residues 59-99 and 189-230; these read LFSP…STNN and PVGN…GQKG. Residues 63–74 are compositionally biased toward low complexity; sequence QQQQQQQQQQQQ.

Interacts with A.thaliana CBP60G; the interaction is direct. Interacts with A.thaliana SARD1. Interacts with G.hirsutum CBP60B.

The protein localises to the secreted. Its subcellular location is the host nucleus. In terms of biological role, effector that binds transcription regulators in the host plant to suppress the host's innate immune response. Inhibits the host plant transcription regulators CBP60G and SARD1. The sequence is that of Effector SCP41 from Verticillium dahliae (strain VdLs.17 / ATCC MYA-4575 / FGSC 10137) (Verticillium wilt).